A 503-amino-acid polypeptide reads, in one-letter code: 26S proteasome non-ATPase regulatory subunit 5 (503 aa).

The residue at position 2 (Ala-2) is an N-acetylalanine.

Belongs to the proteasome subunit S5B/HSM3 family. Interacts with PSMC1, PSMC2, PSMD1 and PSMD6. Part of transient complex containing PSMD5, PSMC2, PSMC1 and PSMD2 formed during the assembly of the 26S proteasome.

Functionally, acts as a chaperone during the assembly of the 26S proteasome, specifically of the base subcomplex of the PA700/19S regulatory complex (RC). In the initial step of the base subcomplex assembly is part of an intermediate PSMD5:PSMC2:PSMC1:PSMD2 module which probably assembles with a PSMD10:PSMC4:PSMC5:PAAF1 module followed by dissociation of PSMD5. The polypeptide is 26S proteasome non-ATPase regulatory subunit 5 (PSMD5) (Bos taurus (Bovine)).